A 448-amino-acid chain; its full sequence is Trigger factor (448 aa).

One can recognise a PPIase FKBP-type domain in the interval 173–258; it reads SDRVTIDFVG…LKQIEWAHMP (86 aa).

This sequence belongs to the FKBP-type PPIase family. Tig subfamily.

The protein resides in the cytoplasm. The catalysed reaction is [protein]-peptidylproline (omega=180) = [protein]-peptidylproline (omega=0). Its function is as follows. Involved in protein export. Acts as a chaperone by maintaining the newly synthesized protein in an open conformation. Functions as a peptidyl-prolyl cis-trans isomerase. In Herminiimonas arsenicoxydans, this protein is Trigger factor.